The sequence spans 403 residues: Phosphomevalonate dehydratase large subunit (403 aa).

(R)-5-phosphomevalonate-binding residues include G48, V49, S50, N79, and P80. C119 provides a ligand contact to [4Fe-4S] cluster. The (R)-5-phosphomevalonate site is built by E138 and S139. C301 and C358 together coordinate [4Fe-4S] cluster. K378 is a (R)-5-phosphomevalonate binding site.

This sequence belongs to the AcnX type II large subunit family. In terms of assembly, heterodimer composed of a large subunit (PMDh-L) and a small subunit (PMDh-S). [4Fe-4S] cluster is required as a cofactor.

It carries out the reaction (R)-5-phosphomevalonate = (2E)-3-methyl-5-phosphooxypent-2-enoate + H2O. It participates in isoprenoid biosynthesis; isopentenyl diphosphate biosynthesis via mevalonate pathway. In terms of biological role, component of a hydro-lyase that catalyzes the dehydration of mevalonate 5-phosphate (MVA5P) to form trans-anhydromevalonate 5-phosphate (tAHMP). Involved in the archaeal mevalonate (MVA) pathway, which provides fundamental precursors for isoprenoid biosynthesis, such as isopentenyl diphosphate (IPP) and dimethylallyl diphosphate (DMAPP). In Methanocaldococcus jannaschii (strain ATCC 43067 / DSM 2661 / JAL-1 / JCM 10045 / NBRC 100440) (Methanococcus jannaschii), this protein is Phosphomevalonate dehydratase large subunit.